The chain runs to 337 residues: Ribosomal RNA small subunit methyltransferase H (337 aa).

S-adenosyl-L-methionine is bound by residues Gly36–His38, Asp56, Phe82, Asp100, and Gln107. The tract at residues Gly314–Arg337 is disordered.

It belongs to the methyltransferase superfamily. RsmH family.

The protein resides in the cytoplasm. The catalysed reaction is cytidine(1402) in 16S rRNA + S-adenosyl-L-methionine = N(4)-methylcytidine(1402) in 16S rRNA + S-adenosyl-L-homocysteine + H(+). In terms of biological role, specifically methylates the N4 position of cytidine in position 1402 (C1402) of 16S rRNA. The polypeptide is Ribosomal RNA small subunit methyltransferase H (Xanthomonas oryzae pv. oryzae (strain PXO99A)).